The primary structure comprises 27 residues: U1-poneritoxin-Na3b (27 aa).

Belongs to the ponericin-G family. As to expression, expressed by the venom gland.

It is found in the secreted. Shows a broad spectrum of activity against both Gram-positive and Gram-negative bacteria. Also has antimicrobial activity against S.cerevisiae. Has insecticidal and non-hemolytic activity. The chain is U1-poneritoxin-Na3b from Neoponera apicalis (Ant).